A 290-amino-acid chain; its full sequence is Inositol-1-monophosphatase (290 aa).

Mg(2+) contacts are provided by Glu-83, Asp-104, Ile-106, and Asp-107. A substrate-binding site is contributed by Glu-83. Substrate contacts are provided by residues 106–109 (IDGT), Arg-206, and Asp-235. Residue Asp-235 participates in Mg(2+) binding.

It belongs to the inositol monophosphatase superfamily. Mg(2+) is required as a cofactor.

It carries out the reaction a myo-inositol phosphate + H2O = myo-inositol + phosphate. This is Inositol-1-monophosphatase (suhB) from Mycobacterium bovis (strain ATCC BAA-935 / AF2122/97).